Consider the following 340-residue polypeptide: Mitotic checkpoint protein BUB3.1 (340 aa).

Positions 1 to 20 (MTTVTPSAGRELSNPPSDGI) are disordered. WD repeat units follow at residues 15–54 (PPSD…LKGE), 96–135 (THDK…GPER), 142–179 (LQPE…QPEQ), 239–278 (DIVY…RLYQ), and 281–324 (KYPT…RSVN).

It belongs to the WD repeat BUB3 family. As to quaternary structure, part of the mitotic checkpoint complex (MCC); interacts with CDC20-1 and CDC20-2. Interacts with MAD2 and BUBR1. Expressed in actively dividing tissues, early in organ development, in young leaves, lateral root primordia and root meristems, flower buds, flowers and siliques.

The protein localises to the nucleus. Its subcellular location is the chromosome. It is found in the centromere. It localises to the kinetochore. The protein resides in the cytoplasm. The protein localises to the cytoskeleton. Its subcellular location is the phragmoplast. It is found in the spindle. Functionally, has a dual function in spindle-assembly checkpoint signaling and in promoting the establishment of correct kinetochore-microtubule (K-MT) attachments. Promotes the formation of stable end-on bipolar attachments. Necessary for kinetochore localization of BUB1. The BUB1/BUB3 complex plays a role in the inhibition of anaphase-promoting complex or cyclosome (APC/C) when spindle-assembly checkpoint is activated and inhibits the ubiquitin ligase activity of APC/C by phosphorylating its activator CDC20. Essential for gametophyte development. The polypeptide is Mitotic checkpoint protein BUB3.1 (BUB3.1) (Arabidopsis thaliana (Mouse-ear cress)).